The primary structure comprises 130 residues: Small ribosomal subunit protein uS9 (130 aa).

Belongs to the universal ribosomal protein uS9 family.

The protein is Small ribosomal subunit protein uS9 of Carboxydothermus hydrogenoformans (strain ATCC BAA-161 / DSM 6008 / Z-2901).